Consider the following 253-residue polypeptide: Transcription factor ORG2 (253 aa).

Residues V71–L123 enclose the bHLH domain.

Homodimer. Roots.

Its subcellular location is the nucleus. The polypeptide is Transcription factor ORG2 (ORG2) (Arabidopsis thaliana (Mouse-ear cress)).